The following is a 61-amino-acid chain: DNA-binding protein 7a (61 aa).

The disordered stretch occupies residues 37-61 (NGKTGRGAVSEKDAPKELLEKLEKK). Over residues 45–61 (VSEKDAPKELLEKLEKK) the composition is skewed to basic and acidic residues.

The protein belongs to the 7 kDa DNA-binding/endoribonuclease P2 family. As to quaternary structure, monomer.

Its subcellular location is the cytoplasm. Functionally, can constrain negative DNA supercoils. May be involved in maintaining the integrity of the genome at high temperature. This Acidianus hospitalis (strain W1) protein is DNA-binding protein 7a.